The sequence spans 5058 residues: ATP-binding cassette sub-family A member 13 (5058 aa).

7 consecutive transmembrane segments (helical) span residues 23 to 43, 3568 to 3588, 3607 to 3627, 3648 to 3668, 3679 to 3699, 3709 to 3729, and 3752 to 3772; these read PVLF…LTVL, VGFF…ASMV, GVHP…VLTI, FIVF…SYLL, ALCT…LLVL, TFLC…ITFL, and FGWV…CGWY. Residues 3842–4074 enclose the ABC transporter 1 domain; that stretch reads VTLVSVTKEY…YGQGLRLTLT (233 aa). An ATP-binding site is contributed by 3875–3882; sequence GTNGAGKT. 7 helical membrane passes run 4226–4246, 4458–4478, 4504–4524, 4536–4556, 4568–4588, 4607–4627, and 4651–4671; these read TLAD…LFMV, VALC…SSVV, FLYD…VIVA, LAAT…WMYL, FISY…ITIM, VLKW…LVEL, and MNFL…LLLL. The region spanning 4718-4956 is the ABC transporter 2 domain; sequence LVLYNLSKHY…FGDGYTVKVW (239 aa). Position 4754–4761 (4754–4761) interacts with ATP; the sequence is GVNGAGKS.

Belongs to the ABC transporter superfamily. Significantly expressed in the bone marrow, trachea, testis, thyroid and lung as well as in skin fibroblasts.

Its subcellular location is the cytoplasmic vesicle membrane. It carries out the reaction cholesterol(in) + ATP + H2O = cholesterol(out) + ADP + phosphate + H(+). May mediate the cholesterol and gangliosides transport from the plasma membrane to intracellular vesicles in an ATP hydrolysis dependent manner, thus playing a role in their internalization by endocytic retrograde transport and may also participate in the endocytosis of synaptic vesicle in cortical neurons. The chain is ATP-binding cassette sub-family A member 13 from Homo sapiens (Human).